The chain runs to 135 residues: HTH-type transcriptional activator AarP (135 aa).

The HTH araC/xylS-type domain occupies 22-120; it reads SEILVWIEGN…GISPSLYRLS (99 aa). 2 DNA-binding regions (H-T-H motif) span residues 39-60 and 87-110; these read DDIA…RKIV and VIDI…KAYL.

Functionally, transcriptional activator of 2'-N-acetyltransferase. The polypeptide is HTH-type transcriptional activator AarP (aarP) (Providencia stuartii).